The following is a 413-amino-acid chain: Gamma-glutamyl phosphate reductase (413 aa).

The protein belongs to the gamma-glutamyl phosphate reductase family.

It localises to the cytoplasm. It carries out the reaction L-glutamate 5-semialdehyde + phosphate + NADP(+) = L-glutamyl 5-phosphate + NADPH + H(+). It functions in the pathway amino-acid biosynthesis; L-proline biosynthesis; L-glutamate 5-semialdehyde from L-glutamate: step 2/2. Functionally, catalyzes the NADPH-dependent reduction of L-glutamate 5-phosphate into L-glutamate 5-semialdehyde and phosphate. The product spontaneously undergoes cyclization to form 1-pyrroline-5-carboxylate. This Lactococcus lactis subsp. cremoris (strain SK11) protein is Gamma-glutamyl phosphate reductase.